The primary structure comprises 116 residues: Protein SPIRAL1-like 1 (116 aa).

Over residues 1–12 (MSRGGSAGGGQS) the composition is skewed to gly residues. A disordered region spans residues 1 to 116 (MSRGGSAGGG…SSLGYLFGGN (116 aa)). Residues 27–43 (AAKPAPAAAPAPAPAPA) show a composition bias toward pro residues. Residues 44-60 (PAAAVAAPAEKPSPAKA) show a composition bias toward low complexity. Polar residues predominate over residues 72 to 90 (GSRSNNNYHRADGQNTGNF). Over residues 103 to 116 (PGGGSSLGYLFGGN) the composition is skewed to gly residues.

It belongs to the SPIRAL1 family.

Its function is as follows. Acts in maintaining the cortical microtubules organization essential for anisotropic cell growth. In Oryza sativa subsp. japonica (Rice), this protein is Protein SPIRAL1-like 1.